We begin with the raw amino-acid sequence, 1128 residues long: Adipocyte enhancer-binding protein 1 (1128 aa).

The N-terminal stretch at 1–25 (MAAVRTASLLCGLLALLALCPEGSP) is a signal peptide. A disordered region spans residues 40-368 (GFLSEFETQS…PRKGEELEEE (329 aa)). Over residues 77–109 (PRADAEAPPEKNKDKEKKGKKDKGPKAAKHLEG) the composition is skewed to basic and acidic residues. Positions 113–163 (PTKKPKEKPPKATKKPKEKPPKATKKPKEKPPKATKKPKEKPPKATKRPSA) are enriched in basic residues. Polar residues-rich tracts occupy residues 178-187 (RSLTSPSNPG) and 198-209 (TSLNTWQGQGEE). A compositionally biased stretch (basic residues) spans 249-261 (RQKQPRPTPSRKR). Composition is skewed to basic and acidic residues over residues 267 to 282 (PEEK…EVDP) and 327 to 363 (EELK…RKGE). Residues 375–532 (IKCPPIGMES…LCMRLEVLGC (158 aa)) form the F5/8 type C domain. The segment at 382 to 547 (MESHRIEDNQ…YSYYAQNEVV (166 aa)) is required for DNA-binding and interaction with NFKBIA. 2 interaction with MAPK1 and MAPK3 regions span residues 413-616 (AGAN…TAGM) and 998-1128 (DPSR…FGDF). A glycan (N-linked (GlcNAc...) asparagine) is linked at N520. The interaction with PTEN stretch occupies residues 547-977 (VTTDSLDFRH…TQCNFILARS (431 aa)). A Peptidase M14 domain is found at 555–896 (RHHSYKDMRQ…EALLTFMEQV (342 aa)). The interval 933 to 1128 (DYWRILNPGE…ETYTVNFGDF (196 aa)) is required for transcriptional repression. Residues 1027 to 1056 (LRRLNSTTGPATSPTPALTLPPSPTPGSTS) form a disordered region. The span at 1030–1044 (LNSTTGPATSPTPAL) shows a compositional bias: low complexity.

This sequence belongs to the peptidase M14 family. As to quaternary structure, interacts with different types of collagen, including collagens I, III, and V. Interacts with GNG5, NFKBIA, MAPK1, MAPK3 and PTEN. May interact with calmodulin. Interaction with MAPK1 may stimulate DNA-binding. Binds to DNA in vitro. Phosphorylated by MAPK1 in vitro. As to expression, expressed in aorta.

The protein resides in the secreted. In terms of biological role, as a positive regulator of collagen fibrillogenesis, it is probably involved in the organization and remodeling of the extracellular matrix. May positively regulate MAP-kinase activity in adipocytes, leading to enhanced adipocyte proliferation and reduced adipocyte differentiation. May also positively regulate NF-kappa-B activity in macrophages by promoting the phosphorylation and subsequent degradation of I-kappa-B-alpha (NFKBIA), leading to enhanced macrophage inflammatory responsiveness. Can act as a transcriptional repressor. The sequence is that of Adipocyte enhancer-binding protein 1 (Aebp1) from Rattus norvegicus (Rat).